Consider the following 370-residue polypeptide: Nucleoprotein (370 aa).

The disordered stretch occupies residues 1-25 (MPPKRRLVDDADAMEDQDLYEPPAS). A Nuclear localization signal motif is present at residues 3-11 (PKRRLVDDA). Positions 10–19 (DADAMEDQDL) are enriched in acidic residues. The short motif at 128–141 (LTELEISSIFSHCC) is the Nuclear export signal element.

Homomultimerizes to form the nucleocapsid. Binds to viral genomic RNA. Interacts with phosphoprotein P. Interacts with host CDK1; this interaction delays host cell cycle in late G2. Interacts with host NFKB1.

Its subcellular location is the virion. The protein localises to the host nucleus. It localises to the host cytoplasm. Its function is as follows. Encapsidates the genome, protecting it from nucleases. The encapsidated genomic RNA is termed the NC and serves as template for transcription and replication. Plays a critical role in the nucleocytoplasmic transport of viral RNP by interaction with other viral proteins. The nuclear export signal is masked by the interaction with the phosphoprotein P. Delays the host cell cycle progression by interacting with the host CDK1-cyclin B1 phase in late G2. Inhibits host NF-kappaB activation. This chain is Nucleoprotein (N), found in Borna disease virus (strain V) (BDV).